Here is a 695-residue protein sequence, read N- to C-terminus: Protein ACTIVITY OF BC1 COMPLEX KINASE 7, chloroplastic (695 aa).

Residues 259 to 589 (EFEEQPIAAA…VQEIRKQADD (331 aa)) form the Protein kinase domain. ATP contacts are provided by residues 265–273 (IAAASLGQV) and K287. Residue D421 is the Proton acceptor of the active site. 2 consecutive transmembrane segments (helical) span residues 633 to 653 (TILQ…NIGV) and 659 to 679 (GSQL…LLVL).

Belongs to the protein kinase superfamily. ADCK protein kinase family. As to expression, mostly expressed in leaves and flowers, and, to a lower extent, in roots.

Its subcellular location is the plastid. The protein resides in the chloroplast thylakoid membrane. The protein localises to the chloroplast. It localises to the plastoglobule. The catalysed reaction is L-seryl-[protein] + ATP = O-phospho-L-seryl-[protein] + ADP + H(+). The enzyme catalyses L-threonyl-[protein] + ATP = O-phospho-L-threonyl-[protein] + ADP + H(+). Its function is as follows. Involved in resistance to oxidative stress. Influences responses to reactive oxygen species (ROS) production. Regulates plastoglobules formation in thylakoids. Together with OSA1, regulates iron distribution within the chloroplast and mediates the oxidative stress response. Together with ABC1K8, influences chloroplast lipid synthesis/accumulation and modulates chloroplast membrane composition in response to stress. This Arabidopsis thaliana (Mouse-ear cress) protein is Protein ACTIVITY OF BC1 COMPLEX KINASE 7, chloroplastic.